A 1332-amino-acid polypeptide reads, in one-letter code: DNA-directed RNA polymerase subunit beta' (1332 aa).

Cysteine 60, cysteine 62, cysteine 75, and cysteine 78 together coordinate Zn(2+). Mg(2+)-binding residues include aspartate 535, aspartate 537, and aspartate 539. Residues cysteine 894, cysteine 977, cysteine 984, and cysteine 987 each coordinate Zn(2+).

This sequence belongs to the RNA polymerase beta' chain family. In terms of assembly, the RNAP catalytic core consists of 2 alpha, 1 beta, 1 beta' and 1 omega subunit. When a sigma factor is associated with the core the holoenzyme is formed, which can initiate transcription. Requires Mg(2+) as cofactor. Zn(2+) is required as a cofactor.

The catalysed reaction is RNA(n) + a ribonucleoside 5'-triphosphate = RNA(n+1) + diphosphate. DNA-dependent RNA polymerase catalyzes the transcription of DNA into RNA using the four ribonucleoside triphosphates as substrates. The polypeptide is DNA-directed RNA polymerase subunit beta' (Corynebacterium kroppenstedtii (strain DSM 44385 / JCM 11950 / CIP 105744 / CCUG 35717)).